Here is a 1181-residue protein sequence, read N- to C-terminus: MAGARSRDPWGASGICYLFGSLLVELLFSRAVAFNLDVMGALRKEGEPGSLFGFSVALHRQLQPRPQSWLLVGAPQALALPGQQANRTGGLFACPLSLEETDCYRVDIDQGADMQKESKENQWLGVSVRSQGPGGKIVTCAHRYEARQRVDQILETRDMIGRCFVLSQDLAIRDELDGGEWKFCEGRPQGHEQFGFCQQGTAAAFSPDSHYLLFGAPGTYNWKGTARVELCAQGSADLAHLDDGPYEAGGEKEQDPRLIPVPANSYFGLLFVTNIDSSDPDQLVYKTLDPADRLPGPAGDLALNSYLGFSIDSGKGLVRAEELSFVAGAPRANHKGAVVILRKDSASRLVPEVMLSGERLTSGFGYSLAVADLNSDGWPDLIVGAPYFFERQEELGGAVYVYLNQGGHWAGISPLRLCGSPDSMFGISLAVLGDLNQDGFPDIAVGAPFDGDGKVFIYHGSSLGVVAKPSQVLEGEAVGIKSFGYSLSGSLDMDGNQYPDLLVGSLADTAVLFRARPILHVSHEVSIAPRSIDLEQPNCAGGHSVCVDLRVCFSYIAVPSSYSPTVALDYVLDADTDRRLRGQVPRVTFLSRNLEEPKHQASGTVWLKHQHDRVCGDAMFQLQENVKDKLRAIVVTLSYSLQTPRLRRQAPGQGLPPVAPILNAHQPSTQRAEIHFLKQGCGEDKICQSNLQLVRARFCTRVSDTEFQPLPMDVDGTTALFALSGQPVIGLELMVTNLPSDPAQPQADGDDAHEAQLLVMLPDSLHYSGVRALDPAEKPLCLSNENASHVECELGNPMKRGAQVTFYLILSTSGISIETTELEVELLLATISEQELHPVSARARVFIELPLSIAGMAIPQQLFFSGVVRGERAMQSERDVGSKVKYEVTVSNQGQSLRTLGSAFLNIMWPHEIANGKWLLYPMQVELEGGQGPGQKGLCSPRPNILHLDVDSRDRRRRELEPPEQQEPGERQEPSMSWWPVSSAEKKKNITLDCARGTANCVVFSCPLYSFDRAAVLHVWGRLWNSTFLEEYSAVKSLEVIVRANITVKSSIKNLMLRDASTVIPVMVYLDPMAVVAEGVPWWVILLAVLAGLLVLALLVLLLWKMGFFKRAKHPEATVPQYHAVKIPREDRQQFKEEKTGTILRNNWGSPRREGPDAHPILAADGHPELGPDGHPGPGTA.

The N-terminal stretch at 1-33 is a signal peptide; the sequence is MAGARSRDPWGASGICYLFGSLLVELLFSRAVA. Over 34 to 1082 the chain is Extracellular; that stretch reads FNLDVMGALR…MAVVAEGVPW (1049 aa). FG-GAP repeat units lie at residues 35 to 103, 110 to 175, 185 to 238, 292 to 349, 350 to 411, 412 to 467, and 471 to 530; these read NLDV…ETDC, QGAD…IRDE, EGRP…SADL, DRLP…ASRL, VPEV…HWAG, ISPL…GVVA, and QVLE…IAPR. An N-linked (GlcNAc...) asparagine glycan is attached at asparagine 86. 3 cysteine pairs are disulfide-bonded: cysteine 94-cysteine 103, cysteine 140-cysteine 163, and cysteine 184-cysteine 197. Residues aspartate 372, asparagine 374, aspartate 376, aspartate 380, aspartate 434, asparagine 436, aspartate 438, aspartate 442, aspartate 492, aspartate 494, asparagine 496, tyrosine 498, and aspartate 500 each contribute to the Ca(2+) site. Intrachain disulfides connect cysteine 539-cysteine 546, cysteine 552-cysteine 615, cysteine 681-cysteine 687, cysteine 781-cysteine 792, cysteine 939-cysteine 994, and cysteine 1001-cysteine 1006. Asparagine 786 carries an N-linked (GlcNAc...) asparagine glycan. A compositionally biased stretch (basic and acidic residues) spans 950 to 961; it reads VDSRDRRRRELE. A disordered region spans residues 950–978; that stretch reads VDSRDRRRRELEPPEQQEPGERQEPSMSW. The N-linked (GlcNAc...) asparagine glycan is linked to asparagine 989. 2 N-linked (GlcNAc...) asparagine glycosylation sites follow: asparagine 1025 and asparagine 1045. A helical membrane pass occupies residues 1083-1103; that stretch reads WVILLAVLAGLLVLALLVLLL. Over 1104–1181 the chain is Cytoplasmic; sequence WKMGFFKRAK…PDGHPGPGTA (78 aa). Positions 1107–1111 match the GFFKR motif motif; the sequence is GFFKR. Residues 1138–1181 form a disordered region; sequence EKTGTILRNNWGSPRREGPDAHPILAADGHPELGPDGHPGPGTA. 3 repeat units span residues 1157–1160, 1165–1168, and 1173–1176. Positions 1157–1176 are 3 X 4 AA repeats of D-X-H-P; that stretch reads DAHPILAADGHPELGPDGHP.

It belongs to the integrin alpha chain family. Heterodimer of an alpha and a beta subunit. The alpha subunit is composed of a heavy and a light chain linked by a disulfide bond. Alpha-7 associates with beta-1. Interacts with COMP. Interacts (via C-terminus intracellular tail region) with CIB1; the interaction is stabilized/increased in a calcium- and magnesium-dependent manner. ADP-ribosylated on at least two sites of the extracellular domain in skeletal myotubes. In terms of processing, a 70 kDa form is created by proteolytic cleavage. Cleavage is elevated during myogenic differentiation and the cleaved form enhances cell adhesion and spreading on laminin. Isoforms containing segment A are predominantly expressed in skeletal muscle. Isoforms containing segment B are abundantly expressed in skeletal muscle, moderately in cardiac muscle, small intestine, colon, ovary and prostate and weakly in lung and testes. Isoforms containing segment X2D are expressed at low levels in fetal and adult skeletal muscle and in cardiac muscle, but are not detected in myoblasts and myotubes. In muscle fibers isoforms containing segment A and B are expressed at myotendinous and neuromuscular junctions; isoforms containing segment C are expressed at neuromuscular junctions and at extrasynaptic sites. Isoforms containing segments X1 or X2 or, at low levels, X1X2 are expressed in fetal and adult skeletal muscle (myoblasts and myotubes) and cardiac muscle.

Its subcellular location is the membrane. Its function is as follows. Integrin alpha-7/beta-1 is the primary laminin receptor on skeletal myoblasts and adult myofibers. During myogenic differentiation, it may induce changes in the shape and mobility of myoblasts, and facilitate their localization at laminin-rich sites of secondary fiber formation. It is involved in the maintenance of the myofibers cytoarchitecture as well as for their anchorage, viability and functional integrity. Isoform Alpha-7X2B and isoform Alpha-7X1B promote myoblast migration on laminin 1 and laminin 2/4, but isoform Alpha-7X1B is less active on laminin 1 (In vitro). Acts as a Schwann cell receptor for laminin-2. Acts as a receptor of COMP and mediates its effect on vascular smooth muscle cells (VSMCs) maturation. Required to promote contractile phenotype acquisition in differentiated airway smooth muscle (ASM) cells. This chain is Integrin alpha-7 (ITGA7), found in Homo sapiens (Human).